Here is a 158-residue protein sequence, read N- to C-terminus: NAD(P)H-quinone oxidoreductase subunit N (158 aa).

It belongs to the complex I NdhN subunit family. As to quaternary structure, NDH-1 can be composed of about 15 different subunits; different subcomplexes with different compositions have been identified which probably have different functions.

The protein localises to the cellular thylakoid membrane. The enzyme catalyses a plastoquinone + NADH + (n+1) H(+)(in) = a plastoquinol + NAD(+) + n H(+)(out). It carries out the reaction a plastoquinone + NADPH + (n+1) H(+)(in) = a plastoquinol + NADP(+) + n H(+)(out). In terms of biological role, NDH-1 shuttles electrons from an unknown electron donor, via FMN and iron-sulfur (Fe-S) centers, to quinones in the respiratory and/or the photosynthetic chain. The immediate electron acceptor for the enzyme in this species is believed to be plastoquinone. Couples the redox reaction to proton translocation, and thus conserves the redox energy in a proton gradient. Cyanobacterial NDH-1 also plays a role in inorganic carbon-concentration. In Gloeothece citriformis (strain PCC 7424) (Cyanothece sp. (strain PCC 7424)), this protein is NAD(P)H-quinone oxidoreductase subunit N.